The primary structure comprises 97 residues: MKRKTLLLIAALVALPGVTYADSPFSSLQSAHEKNTILKDLRKMCTPKGALTDEAWEKKIMASEGNQQHIREAMIAIERNNQHNYWQALGKVECPEM.

This is an uncharacterized protein from Salmonella choleraesuis (strain SC-B67).